The sequence spans 654 residues: Fructose-1,6-bisphosphatase class 3 (654 aa).

Residues 288–307 (NPAFKPKKRPDKHERLTQRE) form a disordered region. Residues 298 to 307 (DKHERLTQRE) are compositionally biased toward basic and acidic residues.

Belongs to the FBPase class 3 family. The cofactor is Mn(2+).

The catalysed reaction is beta-D-fructose 1,6-bisphosphate + H2O = beta-D-fructose 6-phosphate + phosphate. Its pathway is carbohydrate biosynthesis; gluconeogenesis. The chain is Fructose-1,6-bisphosphatase class 3 from Staphylococcus aureus (strain MRSA252).